The sequence spans 428 residues: Serine--tRNA ligase (428 aa).

231–233 (TAE) is an L-serine binding site. Residue 262-264 (RAE) coordinates ATP. Glu-285 is an L-serine binding site. An ATP-binding site is contributed by 349–352 (EISS). Ser-385 serves as a coordination point for L-serine.

It belongs to the class-II aminoacyl-tRNA synthetase family. Type-1 seryl-tRNA synthetase subfamily. As to quaternary structure, homodimer. The tRNA molecule binds across the dimer.

The protein resides in the cytoplasm. The catalysed reaction is tRNA(Ser) + L-serine + ATP = L-seryl-tRNA(Ser) + AMP + diphosphate + H(+). It carries out the reaction tRNA(Sec) + L-serine + ATP = L-seryl-tRNA(Sec) + AMP + diphosphate + H(+). The protein operates within aminoacyl-tRNA biosynthesis; selenocysteinyl-tRNA(Sec) biosynthesis; L-seryl-tRNA(Sec) from L-serine and tRNA(Sec): step 1/1. Its function is as follows. Catalyzes the attachment of serine to tRNA(Ser). Is also able to aminoacylate tRNA(Sec) with serine, to form the misacylated tRNA L-seryl-tRNA(Sec), which will be further converted into selenocysteinyl-tRNA(Sec). This chain is Serine--tRNA ligase, found in Methylorubrum extorquens (strain PA1) (Methylobacterium extorquens).